A 143-amino-acid chain; its full sequence is uncharacterized protein (143 aa).

The next 4 helical transmembrane spans lie at 7–29, 52–74, 87–105, and 120–142; these read LFLF…LSLV, FSLY…NTYL, LGVF…LWAG, and WLGI…IRLG.

Its subcellular location is the cell membrane. This is an uncharacterized protein from Aquifex aeolicus (strain VF5).